The primary structure comprises 201 residues: ATP synthase subunit delta, chloroplastic (201 aa).

This sequence belongs to the ATPase delta chain family. In terms of assembly, F-type ATPases have 2 components, F(1) - the catalytic core - and F(0) - the membrane proton channel. F(1) has five subunits: alpha(3), beta(3), gamma(1), delta(1), epsilon(1). CF(0) has four main subunits: a(1), b(1), b'(1) and c(10-14). The alpha and beta chains form an alternating ring which encloses part of the gamma chain. F(1) is attached to F(0) by a central stalk formed by the gamma and epsilon chains, while a peripheral stalk is formed by the delta, b and b' chains.

It is found in the plastid. It localises to the chloroplast thylakoid membrane. Functionally, f(1)F(0) ATP synthase produces ATP from ADP in the presence of a proton or sodium gradient. F-type ATPases consist of two structural domains, F(1) containing the extramembraneous catalytic core and F(0) containing the membrane proton channel, linked together by a central stalk and a peripheral stalk. During catalysis, ATP synthesis in the catalytic domain of F(1) is coupled via a rotary mechanism of the central stalk subunits to proton translocation. In terms of biological role, this protein is part of the stalk that links CF(0) to CF(1). It either transmits conformational changes from CF(0) to CF(1) or is implicated in proton conduction. This Vaucheria litorea (Yellow-green alga) protein is ATP synthase subunit delta, chloroplastic.